The following is a 364-amino-acid chain: Fructose-bisphosphate aldolase A (364 aa).

At tyrosine 5 the chain carries Phosphotyrosine. Threonine 9 is subject to Phosphothreonine. Phosphoserine occurs at positions 36 and 39. The residue at position 42 (lysine 42) is an N6-acetyllysine; alternate. Lysine 42 is covalently cross-linked (Glycyl lysine isopeptide (Lys-Gly) (interchain with G-Cter in SUMO1); alternate). Lysine 42 is covalently cross-linked (Glycyl lysine isopeptide (Lys-Gly) (interchain with G-Cter in SUMO2); alternate). Position 43 (arginine 43) interacts with beta-D-fructose 1,6-bisphosphate. Serine 46 is subject to Phosphoserine. Position 99 is an N6-(2-hydroxyisobutyryl)lysine (lysine 99). An N6-acetyllysine modification is found at lysine 108. Position 111 is an N6-acetyllysine; alternate (lysine 111). An N6-malonyllysine; alternate modification is found at lysine 111. At serine 132 the chain carries Phosphoserine. At lysine 147 the chain carries N6-(2-hydroxyisobutyryl)lysine. The active-site Proton acceptor is the glutamate 188. The Schiff-base intermediate with dihydroxyacetone-P role is filled by lysine 230. Serine 272 is subject to Phosphoserine. Beta-D-fructose 1,6-bisphosphate is bound by residues serine 272–glycine 274, serine 301, and arginine 304. At lysine 312 the chain carries N6-malonyllysine. At lysine 330 the chain carries N6-acetyllysine.

Belongs to the class I fructose-bisphosphate aldolase family. Homotetramer. Interacts with SNX9 and WAS. Interacts with FBP2; the interaction blocks FBP2 inhibition by physiological concentrations of AMP and reduces inhibition by Ca(2+).

It localises to the cytoplasm. It is found in the myofibril. The protein resides in the sarcomere. Its subcellular location is the i band. The protein localises to the m line. The catalysed reaction is beta-D-fructose 1,6-bisphosphate = D-glyceraldehyde 3-phosphate + dihydroxyacetone phosphate. Its pathway is carbohydrate degradation; glycolysis; D-glyceraldehyde 3-phosphate and glycerone phosphate from D-glucose: step 4/4. Catalyzes the reversible conversion of beta-D-fructose 1,6-bisphosphate (FBP) into two triose phosphate and plays a key role in glycolysis and gluconeogenesis. In addition, may also function as scaffolding protein. This chain is Fructose-bisphosphate aldolase A (ALDOA), found in Pan troglodytes (Chimpanzee).